Consider the following 256-residue polypeptide: Neuroendocrine secretory protein 55 (256 aa).

A signal peptide spans 1–46; the sequence is MDRRSRAHQWRRARHNYNDLCPPIGRRAATALLWLSCSIALLRALA. Positions 61 to 256 are disordered; it reads SFLNAHHRSA…RKGPIPIRRH (196 aa). Residues 86 to 103 are compositionally biased toward basic and acidic residues; the sequence is ESDHEHEEAEPELARPEC. 2 stretches are compositionally biased toward acidic residues: residues 104-139 and 206-216; these read LEYD…ETEP and LDEDPRDPEES. Residues 225–236 show a composition bias toward basic residues; sequence QPRRCKTRRPAR.

It belongs to the NESP55 family. In terms of processing, binds keratan sulfate chains. May be proteolytically processed to give rise to a number of active peptides.

It is found in the cytoplasmic vesicle. Its subcellular location is the secretory vesicle. The protein resides in the synaptic vesicle. The protein localises to the secreted. The sequence is that of Neuroendocrine secretory protein 55 from Rattus norvegicus (Rat).